A 113-amino-acid polypeptide reads, in one-letter code: UPF0060 membrane protein Mmcs_2513 (113 aa).

A run of 4 helical transmembrane segments spans residues 12–32 (ALFVLAALLEIGGAWLVWQGV), 37–57 (GWIWAGAGVIALGAYGFVAAF), 66–86 (ILAAYGGVFVAGSLLWGVVVD), and 92–112 (RWDLTGALVCLVGVGLIMYAP).

The protein belongs to the UPF0060 family.

The protein localises to the cell membrane. The chain is UPF0060 membrane protein Mmcs_2513 from Mycobacterium sp. (strain MCS).